The chain runs to 512 residues: Putative ribose/galactose/methyl galactoside import ATP-binding protein 1 (512 aa).

2 ABC transporter domains span residues 14–251 (IALT…VGRQ) and 262–507 (TSAN…TQRE). Residue 46 to 53 (GENGAGKS) coordinates ATP.

This sequence belongs to the ABC transporter superfamily. Carbohydrate importer 2 (CUT2) (TC 3.A.1.2) family.

The protein resides in the cell inner membrane. The catalysed reaction is D-ribose(out) + ATP + H2O = D-ribose(in) + ADP + phosphate + H(+). The enzyme catalyses D-galactose(out) + ATP + H2O = D-galactose(in) + ADP + phosphate + H(+). Its function is as follows. Part of an ABC transporter complex involved in carbohydrate import. Could be involved in ribose, galactose and/or methyl galactoside import. Responsible for energy coupling to the transport system. This is Putative ribose/galactose/methyl galactoside import ATP-binding protein 1 from Burkholderia lata (strain ATCC 17760 / DSM 23089 / LMG 22485 / NCIMB 9086 / R18194 / 383).